The following is a 372-amino-acid chain: sn-glycerol-3-phosphate import ATP-binding protein UgpC (372 aa).

In terms of domain architecture, ABC transporter spans 2-233 (LDIKQLVKTY…PASTFVASFI (232 aa)). 35-42 (GPSGCGKS) contacts ATP.

The protein belongs to the ABC transporter superfamily. sn-glycerol-3-phosphate importer (TC 3.A.1.1.3) family. In terms of assembly, the complex is composed of two ATP-binding proteins (UgpC), two transmembrane proteins (UgpA and UgpE) and a solute-binding protein (UgpB).

Its subcellular location is the cell inner membrane. It catalyses the reaction sn-glycerol 3-phosphate(out) + ATP + H2O = sn-glycerol 3-phosphate(in) + ADP + phosphate + H(+). In terms of biological role, part of the ABC transporter complex UgpBAEC involved in sn-glycerol-3-phosphate (G3P) import. Responsible for energy coupling to the transport system. The sequence is that of sn-glycerol-3-phosphate import ATP-binding protein UgpC from Vibrio cholerae serotype O1 (strain ATCC 39315 / El Tor Inaba N16961).